Here is a 398-residue protein sequence, read N- to C-terminus: Riboflavin biosynthesis protein RibBA (398 aa).

Residues 1-199 (MFHPIEEALE…IKDLIEYRYN (199 aa)) form a DHBP synthase region. D-ribulose 5-phosphate contacts are provided by residues 26-27 (RE), Asp-31, 138-142 (RAGHT), and Glu-162. Glu-27 contributes to the Mg(2+) binding site. Position 141 (His-141) interacts with Mg(2+). Residues 200–398 (ITTLVNREVD…MKKLGHLLHF (199 aa)) form a GTP cyclohydrolase II region. 251-255 (RVHSE) contacts GTP. Residues Cys-256, Cys-267, and Cys-269 each contribute to the Zn(2+) site. GTP-binding positions include Gln-272, 294 to 296 (EGR), and Thr-316. The Proton acceptor; for GTP cyclohydrolase activity role is filled by Asp-328. The Nucleophile; for GTP cyclohydrolase activity role is filled by Arg-330. GTP is bound by residues Thr-351 and Lys-356.

This sequence in the N-terminal section; belongs to the DHBP synthase family. The protein in the C-terminal section; belongs to the GTP cyclohydrolase II family. It depends on Mg(2+) as a cofactor. Requires Mn(2+) as cofactor. Zn(2+) is required as a cofactor.

The catalysed reaction is D-ribulose 5-phosphate = (2S)-2-hydroxy-3-oxobutyl phosphate + formate + H(+). It carries out the reaction GTP + 4 H2O = 2,5-diamino-6-hydroxy-4-(5-phosphoribosylamino)-pyrimidine + formate + 2 phosphate + 3 H(+). Its pathway is cofactor biosynthesis; riboflavin biosynthesis; 2-hydroxy-3-oxobutyl phosphate from D-ribulose 5-phosphate: step 1/1. The protein operates within cofactor biosynthesis; riboflavin biosynthesis; 5-amino-6-(D-ribitylamino)uracil from GTP: step 1/4. Functionally, catalyzes the conversion of D-ribulose 5-phosphate to formate and 3,4-dihydroxy-2-butanone 4-phosphate. Its function is as follows. Catalyzes the conversion of GTP to 2,5-diamino-6-ribosylamino-4(3H)-pyrimidinone 5'-phosphate (DARP), formate and pyrophosphate. This Bacillus velezensis (strain DSM 23117 / BGSC 10A6 / LMG 26770 / FZB42) (Bacillus amyloliquefaciens subsp. plantarum) protein is Riboflavin biosynthesis protein RibBA.